Reading from the N-terminus, the 377-residue chain is Histidinol-phosphate aminotransferase 2 (377 aa).

A disordered region spans residues N17–P44. N6-(pyridoxal phosphate)lysine is present on K228.

Belongs to the class-II pyridoxal-phosphate-dependent aminotransferase family. Histidinol-phosphate aminotransferase subfamily. Homodimer. The cofactor is pyridoxal 5'-phosphate.

It catalyses the reaction L-histidinol phosphate + 2-oxoglutarate = 3-(imidazol-4-yl)-2-oxopropyl phosphate + L-glutamate. Its pathway is amino-acid biosynthesis; L-histidine biosynthesis; L-histidine from 5-phospho-alpha-D-ribose 1-diphosphate: step 7/9. This is Histidinol-phosphate aminotransferase 2 from Psychrobacter arcticus (strain DSM 17307 / VKM B-2377 / 273-4).